The chain runs to 273 residues: Bidirectional sugar transporter SWEET1a (273 aa).

At 1-6 the chain is on the extracellular side; it reads MEHIAR. The helical transmembrane segment at 7–27 threads the bilayer; that stretch reads FFFGVSGNVIALFLFLSPVVT. Residues 7-95 enclose the MtN3/slv 1 domain; it reads FFFGVSGNVI…VIFLIFAERK (89 aa). Topologically, residues 28–42 are cytoplasmic; it reads FWRIIKKRSTEDFSG. The helical transmembrane segment at 43–63 threads the bilayer; the sequence is VPYNMTLLNCLLSAWYGLPFV. Topologically, residues 64–71 are extracellular; it reads SPNNILVT. A helical membrane pass occupies residues 72–92; the sequence is TINGTGSVIEAIYVVIFLIFA. The Cytoplasmic segment spans residues 93 to 101; the sequence is ERKARLKMM. A helical transmembrane segment spans residues 102-122; sequence GLLGLVTSIFTMVVLVSLLAL. At 123-128 the chain is on the extracellular side; it reads HGQGRK. Residues 129-149 traverse the membrane as a helical segment; that stretch reads LFCGLAATIFSICMYASPLSI. The region spanning 131 to 214 is the MtN3/slv 2 domain; it reads CGLAATIFSI…ILYAIYRNHK (84 aa). Topologically, residues 150-163 are cytoplasmic; that stretch reads MRLVIKTKSVEFMP. The helical transmembrane segment at 164–184 threads the bilayer; sequence FLLSLSVFLCGTSWFIYGLLG. Over 185–188 the chain is Extracellular; that stretch reads RDPF. A helical membrane pass occupies residues 189 to 209; sequence IAIPNGCGSFLGLMQLILYAI. Residues 210 to 273 lie on the Cytoplasmic side of the membrane; that stretch reads YRNHKGATPA…SADDKVASQV (64 aa).

It belongs to the SWEET sugar transporter family. In terms of assembly, forms homooligomers and/or heterooligomers.

It is found in the cell membrane. Functionally, mediates both low-affinity uptake and efflux of sugar across the plasma membrane. The polypeptide is Bidirectional sugar transporter SWEET1a (SWEET1A) (Oryza sativa subsp. japonica (Rice)).